The chain runs to 240 residues: Probable transcriptional regulatory protein VFMJ11_A0186 (240 aa).

It belongs to the TACO1 family.

Its subcellular location is the cytoplasm. In Aliivibrio fischeri (strain MJ11) (Vibrio fischeri), this protein is Probable transcriptional regulatory protein VFMJ11_A0186.